The sequence spans 356 residues: Dynein axonemal heavy chain 12 (356 aa).

6 ANK repeats span residues 17–46 (DSSS…DANV), 50–81 (SGHL…AIKR), 82–111 (SGIS…DVNF), 124–153 (HRKS…MPNQ), 154–183 (DPVN…NVNY), and 185–218 (CRVN…DTEL). An SOCS box domain is found at 290-345 (WSEIHFILTNPRSLKHLCRLKIRKCMGRLRLRCPVFMSFLPLPSRLKAYVLYKEYD).

The protein belongs to the dynein heavy chain family. Consists of at least two heavy chains and a number of intermediate and light chains.

The protein resides in the cytoplasm. Its subcellular location is the cytoskeleton. The protein localises to the cilium axoneme. Its pathway is protein modification; protein ubiquitination. Functionally, force generating protein of respiratory cilia. Produces force towards the minus ends of microtubules. Dynein has ATPase activity; the force-producing power stroke is thought to occur on release of ADP. Involved in sperm motility; implicated in sperm flagellar assembly. May be a substrate-recognition component of a SCF-like ECS (Elongin-Cullin-SOCS-box protein) E3 ubiquitin-protein ligase complex which mediates the ubiquitination and subsequent proteasomal degradation of target proteins. The chain is Dynein axonemal heavy chain 12 (DNAH12) from Bos taurus (Bovine).